We begin with the raw amino-acid sequence, 84 residues long: RNA-binding protein Hfq (84 aa).

The Sm domain occupies 10–69 (EPFLNTLRREHVPVSIYLVNGIKLQGQIESFDQYVVLLRNTVTQMVFKHAISTIVPGRAV).

This sequence belongs to the Hfq family. Homohexamer.

Its function is as follows. RNA chaperone that binds small regulatory RNA (sRNAs) and mRNAs to facilitate mRNA translational regulation in response to envelope stress, environmental stress and changes in metabolite concentrations. Also binds with high specificity to tRNAs. This is RNA-binding protein Hfq from Verminephrobacter eiseniae (strain EF01-2).